The following is a 224-amino-acid chain: Biotin transport ATP-binding protein BioM (224 aa).

Residues 3 to 224 enclose the ABC transporter domain; the sequence is IQFESAGVSF…AIARYREIAA (222 aa). 34 to 41 is a binding site for ATP; that stretch reads GLNGSGKT.

It belongs to the ABC transporter superfamily. As to quaternary structure, part of a biotin transporter complex composed of BioM, BioN and BioY.

The protein localises to the cell inner membrane. Involved in biotin uptake. The protein is Biotin transport ATP-binding protein BioM (bioM) of Rhizobium etli (strain ATCC 51251 / DSM 11541 / JCM 21823 / NBRC 15573 / CFN 42).